The sequence spans 262 residues: Hydroxyethylthiazole kinase (262 aa).

Met50 contributes to the substrate binding site. 2 residues coordinate ATP: Arg125 and Thr171. Gly198 contacts substrate.

It belongs to the Thz kinase family. Requires Mg(2+) as cofactor.

The catalysed reaction is 5-(2-hydroxyethyl)-4-methylthiazole + ATP = 4-methyl-5-(2-phosphooxyethyl)-thiazole + ADP + H(+). Its pathway is cofactor biosynthesis; thiamine diphosphate biosynthesis; 4-methyl-5-(2-phosphoethyl)-thiazole from 5-(2-hydroxyethyl)-4-methylthiazole: step 1/1. Functionally, catalyzes the phosphorylation of the hydroxyl group of 4-methyl-5-beta-hydroxyethylthiazole (THZ). The polypeptide is Hydroxyethylthiazole kinase (Escherichia coli O157:H7).